Reading from the N-terminus, the 130-residue chain is Protein ApaG (130 aa).

The region spanning 3–127 is the ApaG domain; the sequence is RALTRDIEVT…FSLDSPGLVR (125 aa).

The sequence is that of Protein ApaG from Rhizobium meliloti (strain 1021) (Ensifer meliloti).